A 392-amino-acid chain; its full sequence is Xyloside xylosyltransferase 1 (392 aa).

Residues 1 to 19 are Cytoplasmic-facing; the sequence is MGLLRGGAACARAMARLGA. Residues 20–42 traverse the membrane as a helical; Signal-anchor for type II membrane protein segment; the sequence is LRSHYCALLLAAALAVCAFYYLG. Residues 43 to 392 are Lumenal-facing; that stretch reads SGRETFSSAT…GNCNTPIPED (350 aa). A UDP-alpha-D-xylose-binding site is contributed by 103–105; sequence MFT. D225 contacts Mn(2+). L226 lines the UDP-alpha-D-xylose pocket. D227 is a Mn(2+) binding site. The interaction with target proteins stretch occupies residues 262-265; that stretch reads HTFW. Residues S289, L327, and Q330 each coordinate UDP-alpha-D-xylose. A glycoprotein contacts are provided by Q330 and W359. Cystine bridges form between C349–C374 and C356–C385. H382 is a binding site for Mn(2+). An a glycoprotein-binding site is contributed by N384.

It belongs to the glycosyltransferase 8 family. Homodimer. Dimer formation may be essential for the retention in endoplasmic reticulum. It depends on Mg(2+) as a cofactor. The cofactor is Mn(2+).

The protein localises to the endoplasmic reticulum membrane. The enzyme catalyses 3-O-[alpha-D-xylosyl-(1-&gt;3)-beta-D-glucosyl]-L-seryl-[EGF-like domain protein] + UDP-alpha-D-xylose = 3-O-[alpha-D-xylosyl-(1-&gt;3)-alpha-D-xylosyl-(1-&gt;3)-beta-D-glucosyl]-L-seryl-[EGF-like domain protein] + UDP + H(+). Functionally, alpha-1,3-xylosyltransferase, which elongates the O-linked xylose-glucose disaccharide attached to EGF-like repeats in the extracellular domain of target proteins by catalyzing the addition of the second xylose. Known targets include Notch proteins and coagulation factors, such as F9. In Mus musculus (Mouse), this protein is Xyloside xylosyltransferase 1 (Xxylt1).